Consider the following 372-residue polypeptide: Galanin receptor type 2 (372 aa).

Residues 1 to 28 (MNGSGSQGAENTSQEGGSGGWQPEAVLV) lie on the Extracellular side of the membrane. Residues Asn-2 and Asn-11 are each glycosylated (N-linked (GlcNAc...) asparagine). A helical transmembrane segment spans residues 29–49 (PLFFALIFLVGTVGNALVLAV). Residues 50–60 (LLRGGQAVSTT) lie on the Cytoplasmic side of the membrane. A helical transmembrane segment spans residues 61–81 (NLFILNLGVADLCFILCCVPF). Residues 82 to 99 (QATIYTLDDWVFGSLLCK) are Extracellular-facing. An intrachain disulfide couples Cys-98 to Cys-175. A helical membrane pass occupies residues 100–121 (AVHFLIFLTMHASSFTLAAVSL). Residues 122-141 (DRYLAIRYPLHSRELRTPRN) are Cytoplasmic-facing. Residues 142 to 162 (ALAAIGLIWGLALLFSGPYLS) traverse the membrane as a helical segment. At 163 to 187 (YYRQSQLANLTVCHPAWSAPRRRAM) the chain is on the extracellular side. Residues 188-208 (DLCTFVFSYLLPVLVLSLTYA) traverse the membrane as a helical segment. The Cytoplasmic portion of the chain corresponds to 209–237 (RTLRYLWRTVDPVTAGSGSQRAKRKVTRM). A helical membrane pass occupies residues 238–258 (IIIVAVLFCLCWMPHHALILC). The Extracellular portion of the chain corresponds to 259–260 (VW). Residues 261-281 (FGRFPLTRATYALRILSHLVS) form a helical membrane-spanning segment. Residues 282 to 372 (YANSCVNPIV…ASSRTLDPAC (91 aa)) are Cytoplasmic-facing. The interval 353–372 (VPPPALPNCTASSRTLDPAC) is disordered. The span at 361 to 372 (CTASSRTLDPAC) shows a compositional bias: polar residues.

Belongs to the G-protein coupled receptor 1 family.

It localises to the cell membrane. In terms of biological role, receptor for the hormone galanin, GALP and spexin-1. The activity of this receptor is mediated by G proteins that activate the phospholipase C/protein kinase C pathway (via G(q)) and that inhibit adenylyl cyclase (via G(i)). This is Galanin receptor type 2 (Galr2) from Rattus norvegicus (Rat).